We begin with the raw amino-acid sequence, 304 residues long: Release factor glutamine methyltransferase (304 aa).

2 residues coordinate S-adenosyl-L-methionine: D144 and N188. Residue 188–191 coordinates substrate; it reads NPPY.

This sequence belongs to the protein N5-glutamine methyltransferase family. PrmC subfamily.

It carries out the reaction L-glutaminyl-[peptide chain release factor] + S-adenosyl-L-methionine = N(5)-methyl-L-glutaminyl-[peptide chain release factor] + S-adenosyl-L-homocysteine + H(+). In terms of biological role, methylates the class 1 translation termination release factors RF1/PrfA and RF2/PrfB on the glutamine residue of the universally conserved GGQ motif. This chain is Release factor glutamine methyltransferase, found in Mycobacterium tuberculosis (strain CDC 1551 / Oshkosh).